Consider the following 342-residue polypeptide: L-threonine 3-dehydrogenase (342 aa).

Cys-38 lines the Zn(2+) pocket. Residues Thr-40 and His-43 each act as charge relay system in the active site. Zn(2+)-binding residues include His-63, Glu-64, Cys-93, Cys-96, Cys-99, and Cys-107. NAD(+)-binding positions include Ile-175, Asp-195, Arg-200, 262–264, and 286–287; these read LGL and IY.

Belongs to the zinc-containing alcohol dehydrogenase family. In terms of assembly, homotetramer. Zn(2+) is required as a cofactor.

The protein resides in the cytoplasm. It carries out the reaction L-threonine + NAD(+) = (2S)-2-amino-3-oxobutanoate + NADH + H(+). The protein operates within amino-acid degradation; L-threonine degradation via oxydo-reductase pathway; glycine from L-threonine: step 1/2. Catalyzes the NAD(+)-dependent oxidation of L-threonine to 2-amino-3-ketobutyrate. The sequence is that of L-threonine 3-dehydrogenase from Streptomyces coelicolor (strain ATCC BAA-471 / A3(2) / M145).